The following is an 85-amino-acid chain: RNA-binding protein Hfq (85 aa).

The Sm domain maps to 11 to 71 (DTFLNHVRKS…ISTIMPGHPV (61 aa)).

The protein belongs to the Hfq family. As to quaternary structure, homohexamer.

Functionally, RNA chaperone that binds small regulatory RNA (sRNAs) and mRNAs to facilitate mRNA translational regulation in response to envelope stress, environmental stress and changes in metabolite concentrations. Also binds with high specificity to tRNAs. Seems to be involved in the regulation of NifA. This is RNA-binding protein Hfq from Azorhizobium caulinodans (strain ATCC 43989 / DSM 5975 / JCM 20966 / LMG 6465 / NBRC 14845 / NCIMB 13405 / ORS 571).